The sequence spans 157 residues: 2-C-methyl-D-erythritol 2,4-cyclodiphosphate synthase (157 aa).

Residues Asp8 and His10 each contribute to the a divalent metal cation site. Residues 8–10 (DVH) and 34–35 (HS) each bind 4-CDP-2-C-methyl-D-erythritol 2-phosphate. His42 lines the a divalent metal cation pocket. Residues 56–58 (DIG), 61–65 (FPDTD), 100–106 (AQAPKMA), 132–135 (TTTE), Phe139, and Arg142 contribute to the 4-CDP-2-C-methyl-D-erythritol 2-phosphate site.

Belongs to the IspF family. Homotrimer. A divalent metal cation is required as a cofactor.

The enzyme catalyses 4-CDP-2-C-methyl-D-erythritol 2-phosphate = 2-C-methyl-D-erythritol 2,4-cyclic diphosphate + CMP. Its pathway is isoprenoid biosynthesis; isopentenyl diphosphate biosynthesis via DXP pathway; isopentenyl diphosphate from 1-deoxy-D-xylulose 5-phosphate: step 4/6. Its function is as follows. Involved in the biosynthesis of isopentenyl diphosphate (IPP) and dimethylallyl diphosphate (DMAPP), two major building blocks of isoprenoid compounds. Catalyzes the conversion of 4-diphosphocytidyl-2-C-methyl-D-erythritol 2-phosphate (CDP-ME2P) to 2-C-methyl-D-erythritol 2,4-cyclodiphosphate (ME-CPP) with a corresponding release of cytidine 5-monophosphate (CMP). This is 2-C-methyl-D-erythritol 2,4-cyclodiphosphate synthase from Edwardsiella ictaluri (strain 93-146).